The chain runs to 231 residues: Large ribosomal subunit protein uL1 (231 aa).

Belongs to the universal ribosomal protein uL1 family. Part of the 50S ribosomal subunit.

Binds directly to 23S rRNA. The L1 stalk is quite mobile in the ribosome, and is involved in E site tRNA release. Functionally, protein L1 is also a translational repressor protein, it controls the translation of the L11 operon by binding to its mRNA. The sequence is that of Large ribosomal subunit protein uL1 from Ectopseudomonas mendocina (strain ymp) (Pseudomonas mendocina).